The chain runs to 201 residues: MLEKFTVIRGKAVPLRGEDIDTDRILPARFMKVLTFEGLGQYLFYDERFDEKGNPKPHPLNDPRYRGATILLVESGFGSGSSREHAPQAIKRAGFKAIIGESFAEIFFGNATAIGLPCVSLAPEDLGVLFRSVEENPELEVEIDLVNKEVRFGDRTAPLFIREEAREALVEGLWDPIGELLEAGELLDQFDRKLPYPRRTE.

Belongs to the LeuD family. LeuD type 1 subfamily. As to quaternary structure, heterodimer of LeuC and LeuD.

It catalyses the reaction (2R,3S)-3-isopropylmalate = (2S)-2-isopropylmalate. It functions in the pathway amino-acid biosynthesis; L-leucine biosynthesis; L-leucine from 3-methyl-2-oxobutanoate: step 2/4. Functionally, catalyzes the isomerization between 2-isopropylmalate and 3-isopropylmalate, via the formation of 2-isopropylmaleate. The sequence is that of 3-isopropylmalate dehydratase small subunit (leuD) from Thermus thermophilus (strain ATCC 27634 / DSM 579 / HB8).